We begin with the raw amino-acid sequence, 110 residues long: Keratin-associated protein 6-3 (110 aa).

The protein belongs to the KRTAP type 6 family. Interacts with hair keratins.

In the hair cortex, hair keratin intermediate filaments are embedded in an interfilamentous matrix, consisting of hair keratin-associated proteins (KRTAP), which are essential for the formation of a rigid and resistant hair shaft through their extensive disulfide bond cross-linking with abundant cysteine residues of hair keratins. The matrix proteins include the high-sulfur and high-glycine-tyrosine keratins. The sequence is that of Keratin-associated protein 6-3 from Homo sapiens (Human).